A 223-amino-acid chain; its full sequence is uncharacterized protein (223 aa).

The interval 1–30 (MASATVRNVPLLDDDTIPFGEEDEMRDPSR) is disordered. Positions 12-25 (LDDDTIPFGEEDEM) are enriched in acidic residues. 4 helical membrane-spanning segments follow: residues 35 to 55 (YTHPYVTFFHLFFRGAAILIY), 56 to 76 (MFCGWFSDSFITSFVFVVLFL), 129 to 149 (IFWLGLILCPVFWGLFFLFAL), and 154 to 174 (FKWLLLVMIAIALNAANLYGY).

Belongs to the TVP23 family.

It localises to the membrane. This is an uncharacterized protein from Drosophila melanogaster (Fruit fly).